Reading from the N-terminus, the 468-residue chain is ATP synthase subunit beta (468 aa).

148 to 155 (GGAGVGKT) serves as a coordination point for ATP.

Belongs to the ATPase alpha/beta chains family. As to quaternary structure, F-type ATPases have 2 components, CF(1) - the catalytic core - and CF(0) - the membrane proton channel. CF(1) has five subunits: alpha(3), beta(3), gamma(1), delta(1), epsilon(1). CF(0) has three main subunits: a(1), b(2) and c(9-12). The alpha and beta chains form an alternating ring which encloses part of the gamma chain. CF(1) is attached to CF(0) by a central stalk formed by the gamma and epsilon chains, while a peripheral stalk is formed by the delta and b chains.

It is found in the cell inner membrane. It carries out the reaction ATP + H2O + 4 H(+)(in) = ADP + phosphate + 5 H(+)(out). Functionally, produces ATP from ADP in the presence of a proton gradient across the membrane. The catalytic sites are hosted primarily by the beta subunits. In Xanthomonas euvesicatoria pv. vesicatoria (strain 85-10) (Xanthomonas campestris pv. vesicatoria), this protein is ATP synthase subunit beta.